Here is a 1412-residue protein sequence, read N- to C-terminus: DNA-directed RNA polymerase subunit beta' (1412 aa).

Zn(2+)-binding residues include Cys70, Cys72, Cys85, and Cys88. Mg(2+) is bound by residues Asp460, Asp462, and Asp464. Residues Cys819, Cys893, Cys900, and Cys903 each coordinate Zn(2+). Positions 1392–1412 (EEAFEFGTPSAPAEEPQHPAE) are disordered.

This sequence belongs to the RNA polymerase beta' chain family. In terms of assembly, the RNAP catalytic core consists of 2 alpha, 1 beta, 1 beta' and 1 omega subunit. When a sigma factor is associated with the core the holoenzyme is formed, which can initiate transcription. The cofactor is Mg(2+). Zn(2+) is required as a cofactor.

The catalysed reaction is RNA(n) + a ribonucleoside 5'-triphosphate = RNA(n+1) + diphosphate. Functionally, DNA-dependent RNA polymerase catalyzes the transcription of DNA into RNA using the four ribonucleoside triphosphates as substrates. The sequence is that of DNA-directed RNA polymerase subunit beta' from Burkholderia mallei (strain NCTC 10247).